Reading from the N-terminus, the 441-residue chain is N-acetyl-S-(2-succino)cysteine monooxygenase (441 aa).

Residues D59, T96, H146, Y150, S220, and S221 each coordinate FMN.

It belongs to the NtaA/SnaA/DszA monooxygenase family. Homodimer. FMN is required as a cofactor.

It catalyses the reaction N-acetyl-S-(2-succino)-L-cysteine + NADH + O2 + H(+) = N-acetyl-L-cysteine + oxaloacetate + NAD(+) + H2O. It participates in amino-acid biosynthesis; L-cysteine biosynthesis. Functionally, catalyzes the oxidative cleavage of the C-S bond of N-acetyl-S-(2-succino)cysteine, forming oxaloacetate and N-acetylcysteine (NAC). Is involved in a S-(2-succino)cysteine (2SC) degradation pathway that allows B.subtilis to grow on 2SC as a sole sulfur source, via its metabolization to cysteine. Shows almost no activity on S-succinylglutathione and 2SC. The protein is N-acetyl-S-(2-succino)cysteine monooxygenase of Bacillus subtilis (strain 168).